Here is a 2219-residue protein sequence, read N- to C-terminus: E3 ubiquitin-protein ligase Ubr3 (2219 aa).

Disordered stretches follow at residues 1–48 (MDED…DLSS) and 78–134 (AAGA…SALS). A compositionally biased stretch (basic and acidic residues) spans 20 to 29 (VREQTHHPPM). The segment covering 31–42 (EDQELDNEDGSS) has biased composition (acidic residues). Positions 114–134 (GPTTTTSSGTAAESGAASALS) are enriched in low complexity. The UBR-type zinc-finger motif lies at 222–293 (AKCGLVWVPH…AEGFCSDHGI (72 aa)). 2 disordered regions span residues 1348–1367 (SFSLSDGEDQSSDDDSTMDV) and 1440–1464 (QREKQAEAKAREAKEKEERRKKARE). Acidic residues predominate over residues 1353–1367 (DGEDQSSDDDSTMDV). Residues 1607–1643 (CGHHVHLSCLEAYLKTLYTTQRQPVQDRGEFYCPVCR) form an RING-type; degenerate zinc finger. Disordered stretches follow at residues 1872–1902 (VGSDNSAAESQQQESAAGTTNNRRRAGQQQQ) and 1935–1954 (SAAASAAGSSSTTSTNHGAS). Positions 1877–1888 (SAAESQQQESAA) are enriched in low complexity.

The protein belongs to the E3 ubiquitin-protein ligase UBR1-like family. Selectively interacts (via UBR-type zinc finger) with the cleaved form of Diap1; this interaction is enhanced by tal. Interacts with tal and Rrp1. Interacts with ovo isoform B (via N-terminus). Interacts with Cad99C (via the cytoplasmic domain). Interacts with ck and Sans. Interacts with cos (via Kinesin motor domain). Post-translationally, in vitro, self-ubiquitination in the presence of E1, E2 and ubiquitin.

It localises to the cytoplasm. The protein resides in the nucleus. It catalyses the reaction S-ubiquitinyl-[E2 ubiquitin-conjugating enzyme]-L-cysteine + [acceptor protein]-L-lysine = [E2 ubiquitin-conjugating enzyme]-L-cysteine + N(6)-ubiquitinyl-[acceptor protein]-L-lysine.. Its pathway is protein modification; protein ubiquitination. Functionally, E3 ubiquitin-protein ligase which is a component of the N-end rule pathway. Recognizes and binds to proteins bearing specific N-terminal residues, leading to their ubiquitination and subsequent degradation. Binds to the E3 ubiquitin-protein ligase Diap1 and enhances its ubiquitination and anti-apoptotic functions. Essential during trichome development for the ubiquitination of the N-terminus of ovo isoform B (svb), converting it from a transcriptional inhibitor to an activator. Positively regulates a hh-signaling pathway which functions in photoreceptor differentiation. Activation of hh up-regulates transcription of Ubr3, which in turn promotes hh signaling by mediating the ubiquitination and degradation of cos. Necessary for auditory transduction: plays a role in Johnston's organ organization by acting in the regulation of zip and ck function in scolopidial apical attachment. Likely to function by acting in a pathway that negatively regulates the ubiquitination of zip, consequently affecting its interaction with ck. May also negatively regulate a component of the SCF (SKP1-CUL1-F-box protein) E3 ubiquitin-protein ligase complex Cul1, which also appears to function in the negative regulation of the zip-ck interaction and scolopidial apical attachment. This is E3 ubiquitin-protein ligase Ubr3 from Drosophila melanogaster (Fruit fly).